A 305-amino-acid polypeptide reads, in one-letter code: Glycine betaine-binding protein YehZ (305 aa).

Positions 1–23 (MPLLKLWAGSLVMLAAVSLPLQA) are cleaved as a signal peptide.

It belongs to the OsmX family. In terms of assembly, the complex is composed of two ATP-binding proteins (YehX), two transmembrane proteins (YehW and YehY) and a solute-binding protein (YehZ).

The protein localises to the periplasm. Part of an ABC transporter complex involved in low-affinity glycine betaine uptake. Binds glycine betaine with low affinity. This is Glycine betaine-binding protein YehZ (yehZ) from Escherichia coli (strain K12).